The following is a 508-amino-acid chain: Glycerol kinase (508 aa).

T14 contributes to the ADP binding site. 3 residues coordinate ATP: T14, T15, and S16. A sn-glycerol 3-phosphate-binding site is contributed by T14. ADP is bound at residue R18. The sn-glycerol 3-phosphate site is built by R84, E85, Y134, and D247. 5 residues coordinate glycerol: R84, E85, Y134, D247, and Q248. ADP contacts are provided by T269 and G313. Residues T269, G313, Q317, and G416 each coordinate ATP. G416 contacts ADP.

Belongs to the FGGY kinase family.

The enzyme catalyses glycerol + ATP = sn-glycerol 3-phosphate + ADP + H(+). It participates in polyol metabolism; glycerol degradation via glycerol kinase pathway; sn-glycerol 3-phosphate from glycerol: step 1/1. With respect to regulation, inhibited by fructose 1,6-bisphosphate (FBP). Functionally, key enzyme in the regulation of glycerol uptake and metabolism. Catalyzes the phosphorylation of glycerol to yield sn-glycerol 3-phosphate. The sequence is that of Glycerol kinase from Mycoplasmoides gallisepticum (strain R(low / passage 15 / clone 2)) (Mycoplasma gallisepticum).